A 219-amino-acid chain; its full sequence is N-(5'-phosphoribosyl)anthranilate isomerase (219 aa).

This sequence belongs to the TrpF family.

The catalysed reaction is N-(5-phospho-beta-D-ribosyl)anthranilate = 1-(2-carboxyphenylamino)-1-deoxy-D-ribulose 5-phosphate. It functions in the pathway amino-acid biosynthesis; L-tryptophan biosynthesis; L-tryptophan from chorismate: step 3/5. This chain is N-(5'-phosphoribosyl)anthranilate isomerase, found in Mesorhizobium japonicum (strain LMG 29417 / CECT 9101 / MAFF 303099) (Mesorhizobium loti (strain MAFF 303099)).